Reading from the N-terminus, the 472-residue chain is Ras-GEF domain-containing family member 1B (472 aa).

The region spanning 34–164 (HDNNLLSGSL…MIQCLIRKLA (131 aa)) is the N-terminal Ras-GEF domain. The region spanning 204–452 (DPYTLAQQLT…YLASYESEGP (249 aa)) is the Ras-GEF domain.

As to quaternary structure, interacts with CCDC124 during cytokinesis. Interacts with Ras family proteins.

Its subcellular location is the early endosome. It is found in the late endosome. The protein resides in the midbody. Functionally, guanine nucleotide exchange factor (GEF) with specificity for RAP2A, it doesn't seems to activate other Ras family proteins (in vitro). This is Ras-GEF domain-containing family member 1B (RASGEF1B) from Bos taurus (Bovine).